The following is an 800-amino-acid chain: Chondroitin sulfate synthase 1 (800 aa).

Residues 1–7 (MAARGRR) are Cytoplasmic-facing. The helical; Signal-anchor for type II membrane protein transmembrane segment at 8 to 28 (AWLSMLLGLVLGFVLASRLVL) threads the bilayer. The Lumenal portion of the chain corresponds to 29 to 800 (PRASELKRVG…GGSHGSARTA (772 aa)). The tract at residues 36–66 (RVGPRRRPSPEGCRPGQEASQPGGARGDARG) is disordered. N188 and N622 each carry an N-linked (GlcNAc...) asparagine glycan. Positions 632 and 746 each coordinate a divalent metal cation.

This sequence belongs to the chondroitin N-acetylgalactosaminyltransferase family. Requires Co(2+) as cofactor. Mn(2+) is required as a cofactor. It depends on Cd(2+) as a cofactor.

The protein localises to the golgi apparatus. The protein resides in the golgi stack membrane. Its subcellular location is the secreted. The catalysed reaction is 3-O-(beta-D-GlcA-(1-&gt;3)-beta-D-GalNAc-(1-&gt;4)-beta-D-GlcA-(1-&gt;3)-beta-D-Gal-(1-&gt;3)-beta-D-Gal-(1-&gt;4)-beta-D-Xyl)-L-seryl-[protein] + UDP-N-acetyl-alpha-D-galactosamine = 3-O-(beta-D-GalNAc-(1-&gt;4)-beta-D-GlcA-(1-&gt;3)-beta-D-GalNAc-(1-&gt;4)-beta-D-GlcA-(1-&gt;3)-beta-D-Gal-(1-&gt;3)-beta-D-Gal-(1-&gt;4)-beta-D-Xyl)-L-seryl-[protein] + UDP + H(+). It catalyses the reaction 3-O-{beta-D-GlcA-(1-&gt;3)-[beta-D-GalNAc-(1-&gt;4)-beta-D-GlcA-(1-&gt;3)](n)-beta-D-GalNAc-(1-&gt;4)-beta-D-GlcA-(1-&gt;3)-beta-D-Gal-(1-&gt;3)-beta-D-Gal-(1-&gt;4)-beta-D-Xyl}-L-seryl-[protein] + UDP-N-acetyl-alpha-D-galactosamine = 3-O-{[beta-D-GalNAc-(1-&gt;4)-beta-D-GlcA-(1-&gt;3)](n+1)-beta-D-GalNAc-(1-&gt;4)-beta-D-GlcA-(1-&gt;3)-beta-D-Gal-(1-&gt;3)-beta-D-Gal-(1-&gt;4)-beta-D-Xyl}-L-seryl-[protein] + UDP + H(+). It carries out the reaction 3-O-(beta-D-GalNAc-(1-&gt;4)-beta-D-GlcA-(1-&gt;3)-beta-D-Gal-(1-&gt;3)-beta-D-Gal-(1-&gt;4)-beta-D-Xyl)-L-seryl-[protein] + UDP-alpha-D-glucuronate = 3-O-(beta-D-GlcA-(1-&gt;3)-beta-D-GalNAc-(1-&gt;4)-beta-D-GlcA-(1-&gt;3)-beta-D-Gal-(1-&gt;3)-beta-D-Gal-(1-&gt;4)-beta-D-Xyl)-L-seryl-[protein] + UDP + H(+). The enzyme catalyses 3-O-{[beta-D-GalNAc-(1-&gt;4)-beta-D-GlcA-(1-&gt;3)](n)-beta-D-GalNAc-(1-&gt;4)-beta-D-GlcA-(1-&gt;3)-beta-D-Gal-(1-&gt;3)-beta-D-Gal-(1-&gt;4)-beta-D-Xyl}-L-seryl-[protein] + UDP-alpha-D-glucuronate = 3-O-{beta-D-GlcA-(1-&gt;3)-[beta-D-GalNAc-(1-&gt;4)-beta-D-GlcA-(1-&gt;3)](n)-beta-D-GalNAc-(1-&gt;4)-beta-D-GlcA-(1-&gt;3)-beta-D-Gal-(1-&gt;3)-beta-D-Gal-(1-&gt;4)-beta-D-Xyl}-L-seryl-[protein] + UDP + H(+). Functionally, has both beta-1,3-glucuronic acid and beta-1,4-N-acetylgalactosamine transferase activity. Transfers glucuronic acid (GlcUA) from UDP-GlcUA and N-acetylgalactosamine (GalNAc) from UDP-GalNAc to the non-reducing end of the elongating chondroitin polymer. Involved in the negative control of osteogenesis likely through the modulation of NOTCH signaling. This chain is Chondroitin sulfate synthase 1 (Chsy1), found in Mus musculus (Mouse).